The primary structure comprises 55 residues: Large ribosomal subunit protein bL33 (55 aa).

It belongs to the bacterial ribosomal protein bL33 family.

This is Large ribosomal subunit protein bL33 from Rhizobium etli (strain CIAT 652).